The following is a 510-amino-acid chain: Cytochrome P450 11B2, mitochondrial (510 aa).

A mitochondrion-targeting transit peptide spans 1 to 34; that stretch reads MGACDNDFIELHSRVTADVWLARPWQCLHRTRAL. Phe-391 is a binding site for 21-hydroxyprogesterone. Position 457 (Cys-457) interacts with heme.

It belongs to the cytochrome P450 family. Heme is required as a cofactor. As to expression, adrenal cortex.

It localises to the mitochondrion inner membrane. The catalysed reaction is a steroid + 2 reduced [adrenodoxin] + O2 + 2 H(+) = an 11beta-hydroxysteroid + 2 oxidized [adrenodoxin] + H2O. The enzyme catalyses 21-hydroxyprogesterone + 2 reduced [adrenodoxin] + O2 + 2 H(+) = corticosterone + 2 oxidized [adrenodoxin] + H2O. It carries out the reaction corticosterone + 2 reduced [adrenodoxin] + O2 + 2 H(+) = 18-hydroxycorticosterone + 2 oxidized [adrenodoxin] + H2O. It catalyses the reaction 18-hydroxycorticosterone + 2 reduced [adrenodoxin] + O2 + 2 H(+) = aldosterone + 2 oxidized [adrenodoxin] + 2 H2O. The catalysed reaction is 11-deoxycortisol + 2 reduced [adrenodoxin] + O2 + 2 H(+) = cortisol + 2 oxidized [adrenodoxin] + H2O. The enzyme catalyses cortisol + 2 reduced [adrenodoxin] + O2 + 2 H(+) = 18-hydroxycortisol + 2 oxidized [adrenodoxin] + H2O. It carries out the reaction 21-hydroxyprogesterone + 2 reduced [adrenodoxin] + O2 + 2 H(+) = 18-hydroxy-11-deoxycorticosterone + 2 oxidized [adrenodoxin] + H2O. It catalyses the reaction 18-hydroxycortisol + 2 reduced [adrenodoxin] + O2 + 2 H(+) = 18-oxocortisol + 2 oxidized [adrenodoxin] + 2 H2O. The protein operates within steroid biosynthesis. A cytochrome P450 monooxygenase that catalyzes the biosynthesis of aldosterone, the main mineralocorticoid responsible for salt and water homeostasis. Catalyzes three sequential oxidative reactions of 11-deoxycorticosterone (21-hydroxyprogesterone), namely 11-beta hydroxylation, followed by two successive oxidations at C18 yielding 18-hydroxy and then 18-oxo intermediates (that do not leave the enzyme active site during the consecutive hydroxylation reactions), and end with the formation of aldosterone. Can also produce 18-hydroxycortisol and 18-oxocortisol, derived from successive oxidations of cortisol at C18, normally found at very low levels, but significantly increased in primary aldosteronism, the most common form of secondary hypertension. Mechanistically, uses molecular oxygen inserting one oxygen atom into a substrate and reducing the second into a water molecule. Two electrons are provided by NADPH via a two-protein mitochondrial transfer system comprising flavoprotein FDXR (adrenodoxin/ferredoxin reductase) and nonheme iron-sulfur protein FDX1 or FDX2 (adrenodoxin/ferredoxin). Could also be involved in the androgen metabolic pathway. This Rattus norvegicus (Rat) protein is Cytochrome P450 11B2, mitochondrial (Cyp11b2).